Consider the following 618-residue polypeptide: Acetolactate synthase (618 aa).

The segment at 1–30 is disordered; the sequence is MSAPTKPHSPTFKPEPHSAANEPKHPAARP. Thiamine diphosphate is bound at residue glutamate 85. FAD-binding positions include arginine 187, 293-314, and 336-355; these read HGTVAAVAALQRSDLLIALGTR and DIDPAEIGKNRHADVPIVGD. Residues 429–509 form a thiamine pyrophosphate binding region; that stretch reads QHQMWAAQFI…VKVALINNGN (81 aa). Residues aspartate 480 and asparagine 507 each coordinate Mg(2+).

Belongs to the TPP enzyme family. Mg(2+) is required as a cofactor. It depends on thiamine diphosphate as a cofactor.

The enzyme catalyses 2 pyruvate + H(+) = (2S)-2-acetolactate + CO2. The protein operates within amino-acid biosynthesis; L-isoleucine biosynthesis; L-isoleucine from 2-oxobutanoate: step 1/4. Its pathway is amino-acid biosynthesis; L-valine biosynthesis; L-valine from pyruvate: step 1/4. The protein is Acetolactate synthase (ilvB) of Mycobacterium bovis (strain ATCC BAA-935 / AF2122/97).